Here is a 199-residue protein sequence, read N- to C-terminus: Urease accessory protein UreG (199 aa).

8 to 15 serves as a coordination point for GTP; that stretch reads GPVGSGKT.

It belongs to the SIMIBI class G3E GTPase family. UreG subfamily. Homodimer. UreH, UreF and UreG form a complex that acts as a GTP-hydrolysis-dependent molecular chaperone, activating the urease apoprotein by helping to assemble the nickel containing metallocenter of UreC. The UreE protein probably delivers the nickel.

It localises to the cytoplasm. In terms of biological role, facilitates the functional incorporation of the urease nickel metallocenter. This process requires GTP hydrolysis, probably effectuated by UreG. The protein is Urease accessory protein UreG of Helicobacter pylori (strain P12).